The sequence spans 160 residues: Cytochrome b6-f complex subunit 4 (160 aa).

Helical transmembrane passes span 36 to 56, 95 to 115, and 127 to 147; these read ILYMFPICILGALGLIAGLAI, LLGIAGMAAIPLGLMLVPFIE, and PIAMTVFLFGTAAALWLGAGA.

This sequence belongs to the cytochrome b family. PetD subfamily. The 4 large subunits of the cytochrome b6-f complex are cytochrome b6, subunit IV (17 kDa polypeptide, PetD), cytochrome f and the Rieske protein, while the 4 small subunits are PetG, PetL, PetM and PetN. The complex functions as a dimer.

The protein resides in the cellular thylakoid membrane. Its function is as follows. Component of the cytochrome b6-f complex, which mediates electron transfer between photosystem II (PSII) and photosystem I (PSI), cyclic electron flow around PSI, and state transitions. In Synechocystis sp. (strain ATCC 27184 / PCC 6803 / Kazusa), this protein is Cytochrome b6-f complex subunit 4.